A 359-amino-acid chain; its full sequence is Src kinase-associated phosphoprotein 2 (359 aa).

Phosphoserine is present on residues Ser-5, Ser-6, and Ser-9. Residues Pro-14–Gln-64 are homodimerization. The tract at residues Lys-66–Leu-88 is disordered. Residue Tyr-75 is modified to Phosphotyrosine. Ser-87 and Ser-90 each carry phosphoserine. The region spanning Phe-116–Gln-219 is the PH domain. Phosphotyrosine is present on residues Tyr-151 and Tyr-197. At Ser-223 the chain carries Phosphoserine. At Tyr-261 the chain carries Phosphotyrosine. Residues Leu-264–Asp-293 form a disordered region. Basic and acidic residues predominate over residues Lys-275–Asp-293. Ser-283 and Ser-286 each carry phosphoserine. The region spanning Asp-297–Asp-358 is the SH3 domain.

This sequence belongs to the SKAP family. As to quaternary structure, homodimer. Interacts with PTPNS1. Part of a complex consisting of SKAP2, FYB1 and PTPNS1. Part of a complex consisting of SKAP2, FYB1 and LILRB3. May interact with actin. Interacts with FYB1, which is required for SKAP2 protein stability. Interacts with LAT, GRB2, PTK2B and PRAM1. May interact with FYN, HCK and LYN. Interacts with FASLG. Post-translationally, phosphorylated in resting platelets. Phosphorylated by FYN on Tyr-261 upon T-cell activation. Dephosphorylated on Tyr-75 by PTPN22. In terms of tissue distribution, ubiquitously expressed. Present in platelets (at protein level).

It is found in the cytoplasm. Its function is as follows. May be involved in B-cell and macrophage adhesion processes. In B-cells, may act by coupling the B-cell receptor (BCR) to integrin activation. May play a role in src signaling pathway. The sequence is that of Src kinase-associated phosphoprotein 2 (SKAP2) from Homo sapiens (Human).